A 227-amino-acid chain; its full sequence is Fibrillarin-like rRNA/tRNA 2'-O-methyltransferase (227 aa).

Residues 86–87 (TT), 105–106 (EF), 130–131 (DA), and 150–153 (DVAQ) contribute to the S-adenosyl-L-methionine site.

This sequence belongs to the methyltransferase superfamily. Fibrillarin family. As to quaternary structure, interacts with nop5. Component of box C/D small ribonucleoprotein (sRNP) particles that contain rpl7ae, FlpA and nop5, plus a guide RNA. These sRNP particles form homodimers, giving rise to an asymmetric holoenzyme.

Functionally, involved in pre-rRNA and tRNA processing. Utilizes the methyl donor S-adenosyl-L-methionine to catalyze the site-specific 2'-hydroxyl methylation of ribose moieties in rRNA and tRNA. Site specificity is provided by a guide RNA that base pairs with the substrate. Methylation occurs at a characteristic distance from the sequence involved in base pairing with the guide RNA. This chain is Fibrillarin-like rRNA/tRNA 2'-O-methyltransferase, found in Pyrococcus furiosus (strain ATCC 43587 / DSM 3638 / JCM 8422 / Vc1).